Consider the following 175-residue polypeptide: 3-hydroxydecanoyl-[acyl-carrier-protein] dehydratase (175 aa).

The active site involves His71.

It belongs to the thioester dehydratase family. FabA subfamily. In terms of assembly, homodimer.

The protein resides in the cytoplasm. It carries out the reaction a (3R)-hydroxyacyl-[ACP] = a (2E)-enoyl-[ACP] + H2O. It catalyses the reaction (3R)-hydroxydecanoyl-[ACP] = (2E)-decenoyl-[ACP] + H2O. The enzyme catalyses (2E)-decenoyl-[ACP] = (3Z)-decenoyl-[ACP]. It participates in lipid metabolism; fatty acid biosynthesis. In terms of biological role, necessary for the introduction of cis unsaturation into fatty acids. Catalyzes the dehydration of (3R)-3-hydroxydecanoyl-ACP to E-(2)-decenoyl-ACP and then its isomerization to Z-(3)-decenoyl-ACP. Can catalyze the dehydratase reaction for beta-hydroxyacyl-ACPs with saturated chain lengths up to 16:0, being most active on intermediate chain length. The polypeptide is 3-hydroxydecanoyl-[acyl-carrier-protein] dehydratase (Rhodopseudomonas palustris (strain ATCC BAA-98 / CGA009)).